The primary structure comprises 911 residues: Alpha-actinin-4 (911 aa).

The interval 1–269 is actin-binding; sequence MVDYHAANQA…YVSSFYHAFS (269 aa). Positions 12–26 are interaction with VCL; that stretch reads QYGPSSGGNGTGGGG. The tract at residues 12–31 is disordered; that stretch reads QYGPSSGGNGTGGGGGMGDY. Positions 16–29 are enriched in gly residues; sequence SSGGNGTGGGGGMG. Tyr-31 carries the post-translational modification Phosphotyrosine. The interval 40 to 61 is interaction with VCL; that stretch reads RDLLLDPAWEKQQRKTFTAWCN. Calponin-homology (CH) domains lie at 50-154 and 163-269; these read KQQR…LRFA and TSAK…HAFS. Residues 84–88 carry the LXXLL motif motif; that stretch reads LMLLL. Residues 108-126 are interaction with VCL; the sequence is KINNVNKALDFIASKGVKL. The residue at position 114 (Lys-114) is an N6-acetyllysine. The interval 177 to 192 is polyphosphoinositide (PIP2)-binding; the sequence is TAPYKNVNVQNFHISW. N6-acetyllysine is present on Lys-214. Thr-249 carries the phosphothreonine modification. Spectrin repeat units follow at residues 293–403, 413–518, 528–639, and 649–752; these read HLME…WLLN, HLAE…ALEK, QLHL…ALLE, and HLRR…EVEN. 2 positions are modified to N6-acetyllysine: Lys-592 and Lys-625. Residue Ser-696 is modified to Phosphoserine. The tract at residues 736–911 is mediates interaction with MICALL2; the sequence is WEQLLTTIAR…STALYGESDL (176 aa). EF-hand domains are found at residues 765–800 and 806–841; these read EQMQ…LGYD and QGDA…ETTD. Asp-778 lines the Ca(2+) pocket. Position 779 is an N6-acetyllysine (Lys-779). Residues Asp-780 and Glu-789 each contribute to the Ca(2+) site. Lys-859 bears the N6-acetyllysine mark. Phosphoserine is present on Ser-909.

Belongs to the alpha-actinin family. As to quaternary structure, homodimer; antiparallel. Interacts with MAGI1. Interacts with MICALL2 (preferentially in opened conformation); stimulated by RAB13 activation. Identified in a IGF2BP1-dependent mRNP granule complex containing untranslated mRNAs. Component of the CART complex, at least composed of ACTN4, HGS/HRS, MYO5B and TRIM3. Binds TRIM3 at the N-terminus. Interacts with PDLIM2. Identified in a complex with CASK, IQGAP1, MAGI2, NPHS1, SPTAN1 and SPTBN1. Interacts with PPARG and RARA. Binds to VCL; this interaction triggers VCL conformational changes. Interacts with SEPTIN14. Interacts with IGSF8. As to expression, expressed in the foot process layer of podocytes in the kidney glomerulus but not in tubules (at protein level).

The protein resides in the nucleus. The protein localises to the cytoplasm. It is found in the cell junction. It localises to the cytoskeleton. Its subcellular location is the stress fiber. The protein resides in the perinuclear region. In terms of biological role, F-actin cross-linking protein which is thought to anchor actin to a variety of intracellular structures. This is a bundling protein. Probably involved in vesicular trafficking via its association with the CART complex. The CART complex is necessary for efficient transferrin receptor recycling but not for EGFR degradation. Involved in tight junction assembly in epithelial cells probably through interaction with MICALL2. Links MICALL2 to the actin cytoskeleton and recruits it to the tight junctions. May also function as a transcriptional coactivator, stimulating transcription mediated by the nuclear hormone receptors PPARG and RARA. Association with IGSF8 regulates the immune synapse formation and is required for efficient T-cell activation. The protein is Alpha-actinin-4 of Rattus norvegicus (Rat).